Consider the following 248-residue polypeptide: Myelin protein P0 (248 aa).

The first 29 residues, 1–29, serve as a signal peptide directing secretion; it reads MAPGAPSSSPSPILAALLFSSLVLSPALA. The region spanning 30–143 is the Ig-like V-type domain; sequence IVVYTDREIY…DIVGKTSQVT (114 aa). The Extracellular segment spans residues 30 to 153; that stretch reads IVVYTDREIY…LYVFEKVPTR (124 aa). C50 and C127 are joined by a disulfide. Residue N122 is glycosylated (N-linked (GlcNAc...) (complex) asparagine). A helical membrane pass occupies residues 154–179; sequence YGVVLGAVIGGILGVVLLLLLLFYLI. Over 180–248 the chain is Cytoplasmic; that stretch reads RYCWLRRQAA…GLGESRKDKK (69 aa). S210 carries the phosphoserine; by PKC modification. The disordered stretch occupies residues 222 to 248; that stretch reads MLDHSRSTKAASEKKSKGLGESRKDKK. Residues 224-248 are compositionally biased toward basic and acidic residues; the sequence is DHSRSTKAASEKKSKGLGESRKDKK. 2 positions are modified to phosphoserine: S226 and S228. S233 carries the post-translational modification Phosphoserine; by PKC. Phosphoserine occurs at positions 237 and 243.

The protein belongs to the myelin P0 protein family. In terms of assembly, homodimer and homotetramer. Post-translationally, N-glycosylated; contains sulfate-substituted glycan. In terms of tissue distribution, found only in peripheral nervous system Schwann cells.

It localises to the cell membrane. In terms of biological role, is an adhesion molecule necessary for normal myelination in the peripheral nervous system. It mediates adhesion between adjacent myelin wraps and ultimately drives myelin compaction. This chain is Myelin protein P0 (Mpz), found in Mus musculus (Mouse).